Consider the following 1068-residue polypeptide: Carbamoyl phosphate synthase large chain (1068 aa).

The tract at residues 1–401 (MPLNKDIKKV…AFLKGIRSLE (401 aa)) is carboxyphosphate synthetic domain. Residues Arg129, Arg169, Gly175, Gly176, Lys208, Val210, Glu215, Gly241, Ile242, His243, Gln284, and Glu298 each contribute to the ATP site. The 195-residue stretch at 133–327 (RNVMSRINEP…IAKVAAKIAL (195 aa)) folds into the ATP-grasp 1 domain. Mg(2+) contacts are provided by Gln284, Glu298, and Asn300. Mn(2+) contacts are provided by Gln284, Glu298, and Asn300. Residues 402-549 (IGKYSLEHKK…YSTYDVYDEV (148 aa)) form an oligomerization domain region. Residues 550–932 (EVSKNKKVIV…ALYKGFIGAN (383 aa)) form a carbamoyl phosphate synthetic domain region. In terms of domain architecture, ATP-grasp 2 spans 674–864 (DELLEKLQIS…IVDIATRVML (191 aa)). ATP is bound by residues Arg710, Lys749, Leu751, Glu755, Gly780, Val781, His782, Ser783, Gln823, and Glu835. Residues Gln823, Glu835, and Asn837 each contribute to the Mg(2+) site. Residues Gln823, Glu835, and Asn837 each contribute to the Mn(2+) site. The region spanning 933-1068 (MSIKKEKGTI…ETLHIFDLSN (136 aa)) is the MGS-like domain. Residues 933-1068 (MSIKKEKGTI…ETLHIFDLSN (136 aa)) are allosteric domain.

This sequence belongs to the CarB family. Composed of two chains; the small (or glutamine) chain promotes the hydrolysis of glutamine to ammonia, which is used by the large (or ammonia) chain to synthesize carbamoyl phosphate. Tetramer of heterodimers (alpha,beta)4. It depends on Mg(2+) as a cofactor. Requires Mn(2+) as cofactor.

It catalyses the reaction hydrogencarbonate + L-glutamine + 2 ATP + H2O = carbamoyl phosphate + L-glutamate + 2 ADP + phosphate + 2 H(+). It carries out the reaction hydrogencarbonate + NH4(+) + 2 ATP = carbamoyl phosphate + 2 ADP + phosphate + 2 H(+). Its pathway is amino-acid biosynthesis; L-arginine biosynthesis; carbamoyl phosphate from bicarbonate: step 1/1. The protein operates within pyrimidine metabolism; UMP biosynthesis via de novo pathway; (S)-dihydroorotate from bicarbonate: step 1/3. Its function is as follows. Large subunit of the glutamine-dependent carbamoyl phosphate synthetase (CPSase). CPSase catalyzes the formation of carbamoyl phosphate from the ammonia moiety of glutamine, carbonate, and phosphate donated by ATP, constituting the first step of 2 biosynthetic pathways, one leading to arginine and/or urea and the other to pyrimidine nucleotides. The large subunit (synthetase) binds the substrates ammonia (free or transferred from glutamine from the small subunit), hydrogencarbonate and ATP and carries out an ATP-coupled ligase reaction, activating hydrogencarbonate by forming carboxy phosphate which reacts with ammonia to form carbamoyl phosphate. This is Carbamoyl phosphate synthase large chain from Clostridium botulinum (strain Loch Maree / Type A3).